Here is a 455-residue protein sequence, read N- to C-terminus: MAQPHFLLVTFPAQGHVNPSLRFARRLIKTTGARVTFATCLSVIHRSMIPNHNNVENLSFLTFSDGFDDGVISNTDDVQNRLVHFERNGDKALSDFIEANQNGDSPVSCLIYTILPNWVPKVARRFHLPSVHLWIQPAFAFDIYYNYSTGNNSVFEFPNLPSLEIRDLPSFLSPSNTNKAAQAVYQELMDFLKEESNPKILVNTFDSLEPEFLTAIPNIEMVAVGPLLPAEIFTGSESGKDLSRDHQSSSYTLWLDSKTESSVIYVSFGTMVELSKKQIEELARALIEGGRPFLWVITDKLNREAKIEGEEETEIEKIAGFRHELEEVGMIVSWCSQIEVLRHRAIGCFLTHCGWSSSLESLVLGVPVVAFPMWSDQPANAKLLEEIWKTGVRVRENSEGLVERGEIMRCLEAVMEAKSVELRENAEKWKRLATEAGREGGSSDKNVEAFVKSLF.

Histidine 16 acts as the Proton acceptor in catalysis. Histidine 16 contacts an anthocyanidin. Glutamine 337, histidine 352, tryptophan 355, serine 357, glutamate 360, aspartate 376, and glutamine 377 together coordinate UDP-alpha-D-glucose.

Belongs to the UDP-glycosyltransferase family.

The catalysed reaction is (indol-3-yl)acetate + UDP-alpha-D-glucose = 1-O-(indol-3-ylacetyl)-beta-D-glucose + UDP. The protein operates within plant hormone metabolism; auxin conjugation. Its function is as follows. Possesses low catalytic activity in vitro. Also active as glucosyltransferase in vitro on benzoates and benzoate derivatives. This is UDP-glycosyltransferase 75B2 (UGT75B2) from Arabidopsis thaliana (Mouse-ear cress).